Reading from the N-terminus, the 340-residue chain is Glycerol-3-phosphate dehydrogenase [NAD(P)+] (340 aa).

The NADPH site is built by Ser14, Phe15, Arg35, and Lys108. Residues Lys108 and Gly136 each coordinate sn-glycerol 3-phosphate. Ala140 is an NADPH binding site. Sn-glycerol 3-phosphate-binding residues include Lys191, Asp244, Ser254, Arg255, and Asn256. Lys191 functions as the Proton acceptor in the catalytic mechanism. An NADPH-binding site is contributed by Arg255. NADPH is bound at residue Glu281.

It belongs to the NAD-dependent glycerol-3-phosphate dehydrogenase family.

Its subcellular location is the cytoplasm. The enzyme catalyses sn-glycerol 3-phosphate + NAD(+) = dihydroxyacetone phosphate + NADH + H(+). The catalysed reaction is sn-glycerol 3-phosphate + NADP(+) = dihydroxyacetone phosphate + NADPH + H(+). The protein operates within membrane lipid metabolism; glycerophospholipid metabolism. In terms of biological role, catalyzes the reduction of the glycolytic intermediate dihydroxyacetone phosphate (DHAP) to sn-glycerol 3-phosphate (G3P), the key precursor for phospholipid synthesis. The chain is Glycerol-3-phosphate dehydrogenase [NAD(P)+] from Pseudomonas aeruginosa (strain ATCC 15692 / DSM 22644 / CIP 104116 / JCM 14847 / LMG 12228 / 1C / PRS 101 / PAO1).